A 317-amino-acid polypeptide reads, in one-letter code: Metaxin-1 (317 aa).

Glycyl lysine isopeptide (Lys-Gly) (interchain with G-Cter in ubiquitin) cross-links involve residues K38, K41, and K78. A helical membrane pass occupies residues 164–184 (EELEKELYQEARECLTLLSQR).

Belongs to the metaxin family. Interacts with MTX2/metaxin-2. Associates with the mitochondrial contact site and cristae organizing system (MICOS) complex, composed of at least MICOS10/MIC10, CHCHD3/MIC19, CHCHD6/MIC25, APOOL/MIC27, IMMT/MIC60, APOO/MIC23/MIC26 and QIL1/MIC13. This complex was also known under the names MINOS or MitOS complex. The MICOS complex associates with mitochondrial outer membrane proteins SAMM50, MTX1 and MTX2 (together described as components of the mitochondrial outer membrane sorting assembly machinery (SAM) complex) and DNAJC11, mitochondrial inner membrane protein TMEM11 and with HSPA9. The MICOS and SAM complexes together with DNAJC11 are part of a large protein complex spanning both membranes termed the mitochondrial intermembrane space bridging (MIB) complex. Interacts with ARMC1. Ubiquitinated by PRKN during mitophagy, leading to its degradation and enhancement of mitophagy. Deubiquitinated by USP30.

It localises to the mitochondrion outer membrane. In terms of biological role, involved in transport of proteins into the mitochondrion. Essential for embryonic development. This chain is Metaxin-1 (MTX1), found in Sus scrofa (Pig).